A 314-amino-acid chain; its full sequence is Nodulation protein D 1 (314 aa).

In terms of domain architecture, HTH lysR-type spans 6 to 63 (LDLNLLVALDALMTERNLTAAARSINLSQPAMSAAVGRLRTYFNDDLFTMVGRELVPT). Residues 23–42 (LTAAARSINLSQPAMSAAVG) constitute a DNA-binding region (H-T-H motif).

It belongs to the LysR transcriptional regulatory family.

NodD regulates the expression of the nodABCFE genes which encode other nodulation proteins. NodD is also a negative regulator of its own expression. Binds flavonoids as inducers. The chain is Nodulation protein D 1 (nodD1) from Rhizobium leguminosarum bv. phaseoli.